Here is a 376-residue protein sequence, read N- to C-terminus: Heat-inducible transcription repressor HrcA (376 aa).

This sequence belongs to the HrcA family.

Functionally, negative regulator of class I heat shock genes (grpE-dnaK-dnaJ and groELS operons). Prevents heat-shock induction of these operons. The chain is Heat-inducible transcription repressor HrcA from Chloroflexus aggregans (strain MD-66 / DSM 9485).